Consider the following 292-residue polypeptide: 4-hydroxy-tetrahydrodipicolinate synthase (292 aa).

Residue Thr45 participates in pyruvate binding. The active-site Proton donor/acceptor is the Tyr133. Residue Lys161 is the Schiff-base intermediate with substrate of the active site. Residue Ile203 participates in pyruvate binding.

This sequence belongs to the DapA family. In terms of assembly, homotetramer; dimer of dimers.

The protein resides in the cytoplasm. It catalyses the reaction L-aspartate 4-semialdehyde + pyruvate = (2S,4S)-4-hydroxy-2,3,4,5-tetrahydrodipicolinate + H2O + H(+). It participates in amino-acid biosynthesis; L-lysine biosynthesis via DAP pathway; (S)-tetrahydrodipicolinate from L-aspartate: step 3/4. Its function is as follows. Catalyzes the condensation of (S)-aspartate-beta-semialdehyde [(S)-ASA] and pyruvate to 4-hydroxy-tetrahydrodipicolinate (HTPA). The protein is 4-hydroxy-tetrahydrodipicolinate synthase of Aromatoleum aromaticum (strain DSM 19018 / LMG 30748 / EbN1) (Azoarcus sp. (strain EbN1)).